We begin with the raw amino-acid sequence, 144 residues long: Large ribosomal subunit protein uL13 (144 aa).

Belongs to the universal ribosomal protein uL13 family. In terms of assembly, part of the 50S ribosomal subunit.

This protein is one of the early assembly proteins of the 50S ribosomal subunit, although it is not seen to bind rRNA by itself. It is important during the early stages of 50S assembly. This is Large ribosomal subunit protein uL13 from Nitrosomonas eutropha (strain DSM 101675 / C91 / Nm57).